We begin with the raw amino-acid sequence, 339 residues long: Ketol-acid reductoisomerase (NADP(+)) (339 aa).

The 182-residue stretch at 1–182 folds into the KARI N-terminal Rossmann domain; the sequence is MRVYYDRDAD…GGGRAGIIET (182 aa). NADP(+)-binding positions include 24–27, arginine 48, serine 51, threonine 53, and 83–86; these read YGSQ and DELQ. Histidine 108 is a catalytic residue. Glycine 134 contacts NADP(+). Positions 183–328 constitute a KARI C-terminal knotted domain; the sequence is TFREECETDL…AKLREMMPWI (146 aa). Positions 191, 195, 227, and 231 each coordinate Mg(2+). A substrate-binding site is contributed by serine 252.

The protein belongs to the ketol-acid reductoisomerase family. It depends on Mg(2+) as a cofactor.

It catalyses the reaction (2R)-2,3-dihydroxy-3-methylbutanoate + NADP(+) = (2S)-2-acetolactate + NADPH + H(+). It carries out the reaction (2R,3R)-2,3-dihydroxy-3-methylpentanoate + NADP(+) = (S)-2-ethyl-2-hydroxy-3-oxobutanoate + NADPH + H(+). It participates in amino-acid biosynthesis; L-isoleucine biosynthesis; L-isoleucine from 2-oxobutanoate: step 2/4. Its pathway is amino-acid biosynthesis; L-valine biosynthesis; L-valine from pyruvate: step 2/4. In terms of biological role, involved in the biosynthesis of branched-chain amino acids (BCAA). Catalyzes an alkyl-migration followed by a ketol-acid reduction of (S)-2-acetolactate (S2AL) to yield (R)-2,3-dihydroxy-isovalerate. In the isomerase reaction, S2AL is rearranged via a Mg-dependent methyl migration to produce 3-hydroxy-3-methyl-2-ketobutyrate (HMKB). In the reductase reaction, this 2-ketoacid undergoes a metal-dependent reduction by NADPH to yield (R)-2,3-dihydroxy-isovalerate. This Rhodopseudomonas palustris (strain BisA53) protein is Ketol-acid reductoisomerase (NADP(+)).